The chain runs to 374 residues: PqqA peptide cyclase (374 aa).

Residues 7 to 222 (VTPPLWLLAE…VADYRQRMGA (216 aa)) form the Radical SAM core domain. [4Fe-4S] cluster is bound by residues Cys21, Cys25, and Cys28.

The protein belongs to the radical SAM superfamily. PqqE family. As to quaternary structure, interacts with PqqD. The interaction is necessary for activity of PqqE. Requires [4Fe-4S] cluster as cofactor.

The catalysed reaction is [PQQ precursor protein] + S-adenosyl-L-methionine = E-Y cross-linked-[PQQ precursor protein] + 5'-deoxyadenosine + L-methionine + H(+). The protein operates within cofactor biosynthesis; pyrroloquinoline quinone biosynthesis. Catalyzes the cross-linking of a glutamate residue and a tyrosine residue in the PqqA protein as part of the biosynthesis of pyrroloquinoline quinone (PQQ). This chain is PqqA peptide cyclase, found in Kluyvera intermedia (Enterobacter intermedius).